Reading from the N-terminus, the 432-residue chain is Adenylosuccinate synthetase (432 aa).

Residues 12–18 and 40–42 contribute to the GTP site; these read GDEGKGK and GHT. Aspartate 13 acts as the Proton acceptor in catalysis. Aspartate 13 and glycine 40 together coordinate Mg(2+). IMP contacts are provided by residues 13-16, 38-41, threonine 130, arginine 144, glutamine 225, threonine 240, and arginine 304; these read DEGK and NAGH. The Proton donor role is filled by histidine 41. 300–306 contributes to the substrate binding site; that stretch reads ATTGRRR. Residues arginine 306, 332–334, and 415–417 each bind GTP; these read KLD and SVG.

The protein belongs to the adenylosuccinate synthetase family. In terms of assembly, homodimer. Mg(2+) serves as cofactor.

The protein localises to the cytoplasm. It carries out the reaction IMP + L-aspartate + GTP = N(6)-(1,2-dicarboxyethyl)-AMP + GDP + phosphate + 2 H(+). Its pathway is purine metabolism; AMP biosynthesis via de novo pathway; AMP from IMP: step 1/2. Functionally, plays an important role in the de novo pathway of purine nucleotide biosynthesis. Catalyzes the first committed step in the biosynthesis of AMP from IMP. The chain is Adenylosuccinate synthetase from Syntrophus aciditrophicus (strain SB).